Here is a 539-residue protein sequence, read N- to C-terminus: Zinc finger and BTB domain-containing protein 7B (539 aa).

The BTB domain occupies 34–115; that stretch reads CDLTIRTQGL…AYTATLTTSS (82 aa). At Ser-150 the chain carries Phosphoserine. The disordered stretch occupies residues 171-308; the sequence is ASGVPNGEDS…SPEELGSDED (138 aa). Pro residues predominate over residues 182-196; it reads PQVPLPPPPPPPPRP. Over residues 197–206 the composition is skewed to basic residues; the sequence is VARRSRKPRK. 2 positions are modified to N6-acetyllysine; by EP300; alternate: Lys-206 and Lys-212. Glycyl lysine isopeptide (Lys-Gly) (interchain with G-Cter in ubiquitin); alternate cross-links involve residues Lys-206 and Lys-212. Residues 273-282 are compositionally biased toward acidic residues; the sequence is YEGEEEEEEL. Lys-335 bears the N6-acetyllysine; by EP300; alternate mark. Residue Lys-335 forms a Glycyl lysine isopeptide (Lys-Gly) (interchain with G-Cter in ubiquitin); alternate linkage. Residues 344 to 400 form a required for interaction with and acetylation by EP300 region; it reads MPQECPVCHKIIHGAGKLPRHMRTHTGEKPFACEVCGVRFTRNDKLKIHMRKHTGER. The C2H2-type 1 zinc-finger motif lies at 346–368; sequence QECPVCHKIIHGAGKLPRHMRTH. Thr-369 carries the post-translational modification Phosphothreonine. 2 consecutive C2H2-type zinc fingers follow at residues 374-396 and 402-424; these read FACE…MRKH and YSCP…MHLH. Residues 430 to 454 form a C2H2-type 4; atypical zinc finger; that stretch reads YECHLCHKAFAKEDHLQRHLKGQNC. Disordered stretches follow at residues 458 to 486 and 501 to 539; these read RTRR…GLDL and FWEQ…MESS. Residues 508–517 show a composition bias toward pro residues; the sequence is TGPPVSTPGP.

In terms of assembly, homodimerizes. Interacts with NCL, NEDD4 and YBX1. Interacts with HNRNPU (via RNA-binding RGG-box region); the interaction facilitates the recruitment of long non-coding RNA Blnc1 by ZBTB7B. Interacts with HDAC4 and HDAC5; the interaction allows the recruitment of HDAC4 and HDAC5 on CD8 loci for deacetylation and possible inhibition of CD8 genes expression. In terms of processing, acetylated directly and specifically by EP300. EP300-mediated acetylation of Lys-206, Lys-212 and Lys-335 stabilizes the protein by antagonizing ubiquitin conjugation. Ubiquitinated, leading to proteasomal degradation. Competes with acetylation on Lys-206, Lys-212 and Lys-335.

The protein resides in the nucleus. Functionally, transcription regulator that acts as a key regulator of lineage commitment of immature T-cell precursors. Exerts distinct biological functions in the mammary epithelial cells and T cells in a tissue-specific manner. Necessary and sufficient for commitment of CD4 lineage, while its absence causes CD8 commitment. Development of immature T-cell precursors (thymocytes) to either the CD4 helper or CD8 killer T-cell lineages correlates precisely with their T-cell receptor specificity for major histocompatibility complex class II or class I molecules, respectively. Cross-antagonism between ZBTB7B and CBF complexes are determinative to CD4 versus CD8 cell fate decision. Suppresses RUNX3 expression and imposes CD4+ lineage fate by inducing the SOCS suppressors of cytokine signaling. induces, as a transcriptional activator, SOCS genes expression which represses RUNX3 expression and promotes the CD4+ lineage fate. During CD4 lineage commitment, associates with multiple sites at the CD8 locus, acting as a negative regulator of the CD8 promoter and enhancers by epigenetic silencing through the recruitment of class II histone deacetylases, such as HDAC4 and HDAC5, to these loci. Regulates the development of IL17-producing CD1d-restricted naural killer (NK) T cells. Also functions as an important metabolic regulator in the lactating mammary glands. Critical feed-forward regulator of insulin signaling in mammary gland lactation, directly regulates expression of insulin receptor substrate-1 (IRS-1) and insulin-induced Akt-mTOR-SREBP signaling. Transcriptional repressor of the collagen COL1A1 and COL1A2 genes. May also function as a repressor of fibronectin and possibly other extracellular matrix genes. Potent driver of brown fat development, thermogenesis and cold-induced beige fat formation. Recruits the brown fat lncRNA 1 (Blnc1):HNRNPU ribonucleoprotein complex to activate thermogenic gene expression in brown and beige adipocytes. The sequence is that of Zinc finger and BTB domain-containing protein 7B from Homo sapiens (Human).